Reading from the N-terminus, the 424-residue chain is Protein shisa-9 (424 aa).

The N-terminal stretch at 1 to 23 (MRRVLRLLLGCFLTELCARMCRA) is a signal peptide. Over 24-149 (QERSGHGQLA…DPLHDPTKDK (126 aa)) the chain is Extracellular. Residues N45, N89, and N116 are each glycosylated (N-linked (GlcNAc...) asparagine). The chain crosses the membrane as a helical span at residues 150–170 (TNLIVYIICGVVAVMVLVGIF). The Cytoplasmic portion of the chain corresponds to 171–424 (TKLGLEKAHR…ITNSKTEVTV (254 aa)). Disordered stretches follow at residues 333–373 (PRAF…TWDP) and 389–424 (LGIA…EVTV). Composition is skewed to polar residues over residues 362–373 (YNSTANFKTWDP) and 402–424 (TRTQ…EVTV).

This sequence belongs to the shisa family. SHISA9 subfamily. Component of some AMPA receptors (ionotropic glutamate receptors) complex, at least composed of some AMPA receptor (GRIA1, GRIA2 and/or GRIA3), CACNG2 and SHISA9, as well as low level of DLG4. As to expression, brain-specific. Mainly expressed in neurons, including in hippocampus, cerebral cortex, striatum, thalamus, olfactory bulb and cerebellum. Expressed in most brain structures during embryonic and postnatal development.

It localises to the cell projection. The protein resides in the dendritic spine membrane. It is found in the synapse. Functionally, regulator of short-term neuronal synaptic plasticity in the dentate gyrus. Associates with AMPA receptors (ionotropic glutamate receptors) in synaptic spines and promotes AMPA receptor desensitization at excitatory synapses. This chain is Protein shisa-9 (Shisa9), found in Mus musculus (Mouse).